The primary structure comprises 463 residues: Ribosomal protein uS12 methylthiotransferase RimO (463 aa).

Residues 15–130 form the MTTase N-terminal domain; sequence PKVGMVSLGC…VMQAVHSHLP (116 aa). Residues C24, C60, C89, C161, C165, and C168 each coordinate [4Fe-4S] cluster. The Radical SAM core domain occupies 147-392; that stretch reads LTPRHYAYLK…MEVAEEVSAA (246 aa). One can recognise a TRAM domain in the interval 395–463; that stretch reads ARKIGKTLKV…ADSHDLWGEV (69 aa).

This sequence belongs to the methylthiotransferase family. RimO subfamily. The cofactor is [4Fe-4S] cluster.

Its subcellular location is the cytoplasm. It catalyses the reaction L-aspartate(89)-[ribosomal protein uS12]-hydrogen + (sulfur carrier)-SH + AH2 + 2 S-adenosyl-L-methionine = 3-methylsulfanyl-L-aspartate(89)-[ribosomal protein uS12]-hydrogen + (sulfur carrier)-H + 5'-deoxyadenosine + L-methionine + A + S-adenosyl-L-homocysteine + 2 H(+). Its function is as follows. Catalyzes the methylthiolation of an aspartic acid residue of ribosomal protein uS12. The protein is Ribosomal protein uS12 methylthiotransferase RimO of Burkholderia pseudomallei (strain 668).